The chain runs to 316 residues: ATP synthase gamma chain (316 aa).

Belongs to the ATPase gamma chain family. F-type ATPases have 2 components, CF(1) - the catalytic core - and CF(0) - the membrane proton channel. CF(1) has five subunits: alpha(3), beta(3), gamma(1), delta(1), epsilon(1). CF(0) has three main subunits: a, b and c.

It is found in the cellular thylakoid membrane. Its function is as follows. Produces ATP from ADP in the presence of a proton gradient across the membrane. The gamma chain is believed to be important in regulating ATPase activity and the flow of protons through the CF(0) complex. The protein is ATP synthase gamma chain of Prochlorococcus marinus (strain MIT 9312).